We begin with the raw amino-acid sequence, 447 residues long: Glutamyl-tRNA reductase (447 aa).

Substrate is bound by residues 49–52 (TCNR), serine 109, 114–116 (EQQ), and glutamine 120. The Nucleophile role is filled by cysteine 50. 189 to 194 (GAGSMG) is an NADP(+) binding site.

It belongs to the glutamyl-tRNA reductase family. Homodimer.

The catalysed reaction is (S)-4-amino-5-oxopentanoate + tRNA(Glu) + NADP(+) = L-glutamyl-tRNA(Glu) + NADPH + H(+). It functions in the pathway porphyrin-containing compound metabolism; protoporphyrin-IX biosynthesis; 5-aminolevulinate from L-glutamyl-tRNA(Glu): step 1/2. In terms of biological role, catalyzes the NADPH-dependent reduction of glutamyl-tRNA(Glu) to glutamate 1-semialdehyde (GSA). The chain is Glutamyl-tRNA reductase from Mycobacterium sp. (strain JLS).